We begin with the raw amino-acid sequence, 201 residues long: Protein GrpE (201 aa).

Residues 1 to 32 (MTDRDRQPEDTTAPTGEPVVSKPYIMPDDPEP) are disordered.

This sequence belongs to the GrpE family. Homodimer.

The protein localises to the cytoplasm. Functionally, participates actively in the response to hyperosmotic and heat shock by preventing the aggregation of stress-denatured proteins, in association with DnaK and GrpE. It is the nucleotide exchange factor for DnaK and may function as a thermosensor. Unfolded proteins bind initially to DnaJ; upon interaction with the DnaJ-bound protein, DnaK hydrolyzes its bound ATP, resulting in the formation of a stable complex. GrpE releases ADP from DnaK; ATP binding to DnaK triggers the release of the substrate protein, thus completing the reaction cycle. Several rounds of ATP-dependent interactions between DnaJ, DnaK and GrpE are required for fully efficient folding. In Bradyrhizobium diazoefficiens (strain JCM 10833 / BCRC 13528 / IAM 13628 / NBRC 14792 / USDA 110), this protein is Protein GrpE.